Reading from the N-terminus, the 225-residue chain is uncharacterized protein (225 aa).

A signal peptide spans 1-22; that stretch reads MLQHYSVSWKKGLAALCLLAVA. The region spanning 161 to 190 is the 4Fe-4S ferredoxin-type domain; that stretch reads GNLTAAEEKKTGCLVCLDSCPVGIVSNATY.

This is an uncharacterized protein from Escherichia coli (strain K12).